The following is a 207-amino-acid chain: Acyl-homoserine-lactone synthase (207 aa).

It belongs to the autoinducer synthase family.

It catalyses the reaction a fatty acyl-[ACP] + S-adenosyl-L-methionine = an N-acyl-L-homoserine lactone + S-methyl-5'-thioadenosine + holo-[ACP] + H(+). Functionally, required for the synthesis of N-butanoyl-L-homoserine lactone (BHL), an autoinducer molecule which binds to AhyR. The chain is Acyl-homoserine-lactone synthase (ahyI) from Aeromonas hydrophila.